A 113-amino-acid chain; its full sequence is Large ribosomal subunit protein bL17 (113 aa).

It belongs to the bacterial ribosomal protein bL17 family. Part of the 50S ribosomal subunit. Contacts protein L32.

This Syntrophomonas wolfei subsp. wolfei (strain DSM 2245B / Goettingen) protein is Large ribosomal subunit protein bL17.